Here is a 94-residue protein sequence, read N- to C-terminus: Small ribosomal subunit protein bS18 (94 aa).

A compositionally biased stretch (polar residues) spans 1 to 11; sequence MANERPTSQQR. The segment at 1 to 24 is disordered; sequence MANERPTSQQRPAGGPRKRRPFQR.

Belongs to the bacterial ribosomal protein bS18 family. In terms of assembly, part of the 30S ribosomal subunit. Forms a tight heterodimer with protein bS6.

In terms of biological role, binds as a heterodimer with protein bS6 to the central domain of the 16S rRNA, where it helps stabilize the platform of the 30S subunit. In Pelobacter propionicus (strain DSM 2379 / NBRC 103807 / OttBd1), this protein is Small ribosomal subunit protein bS18.